Reading from the N-terminus, the 364-residue chain is MANVVLRNVRKTYPGGFEAIKGVDFEVGDGQFCVLVGPSGCGKSTLLRMVAGLETITAGEIDIGGRIVNQIEPADRDIAMVFQNYALYPHMSVYNNMAYGLRNRGMPKPEIDARVQEAARILEIGTMLDRKPRQLSGGQRQRVAMGRAIVRQPKVFLFDEPLSNLDAKLRVAMRVEIRKLQRRLGTTAIYVTHDQLEAMTLADILVVMNAGVVEQIGSPLEVYARPATTFVASFIGAPPMNLMLLDAEGVRARFGNAATGAGILGVRPEDLVISREPAATDGLSLDLTVEAIERVGPETFIYGTRSRAGDPTAVSSKPGELPPDDIIVRVPGQDAPAIGDHMFATALPQHLHLFSADGRRRIEL.

The 232-residue stretch at 4-235 (VVLRNVRKTY…PATTFVASFI (232 aa)) folds into the ABC transporter domain. 37–44 (GPSGCGKS) serves as a coordination point for ATP.

This sequence belongs to the ABC transporter superfamily. sn-glycerol-3-phosphate importer (TC 3.A.1.1.3) family. The complex is composed of two ATP-binding proteins (UgpC), two transmembrane proteins (UgpA and UgpE) and a solute-binding protein (UgpB).

The protein localises to the cell inner membrane. It catalyses the reaction sn-glycerol 3-phosphate(out) + ATP + H2O = sn-glycerol 3-phosphate(in) + ADP + phosphate + H(+). Part of the ABC transporter complex UgpBAEC involved in sn-glycerol-3-phosphate (G3P) import. Responsible for energy coupling to the transport system. The polypeptide is sn-glycerol-3-phosphate import ATP-binding protein UgpC (Rhodopseudomonas palustris (strain HaA2)).